A 179-amino-acid chain; its full sequence is NADH-quinone oxidoreductase subunit B (179 aa).

Cysteine 53, cysteine 54, cysteine 118, and cysteine 148 together coordinate [4Fe-4S] cluster.

This sequence belongs to the complex I 20 kDa subunit family. As to quaternary structure, NDH-1 is composed of 14 different subunits. Subunits NuoB, C, D, E, F, and G constitute the peripheral sector of the complex. It depends on [4Fe-4S] cluster as a cofactor.

The protein resides in the cell membrane. The catalysed reaction is a quinone + NADH + 5 H(+)(in) = a quinol + NAD(+) + 4 H(+)(out). Functionally, NDH-1 shuttles electrons from NADH, via FMN and iron-sulfur (Fe-S) centers, to quinones in the respiratory chain. The immediate electron acceptor for the enzyme in this species is believed to be a menaquinone. Couples the redox reaction to proton translocation (for every two electrons transferred, four hydrogen ions are translocated across the cytoplasmic membrane), and thus conserves the redox energy in a proton gradient. This chain is NADH-quinone oxidoreductase subunit B, found in Bacillus thuringiensis (strain Al Hakam).